The primary structure comprises 210 residues: 23 kDa jasmonate-induced protein (210 aa).

It belongs to the jasmonate-induced protein family.

The sequence is that of 23 kDa jasmonate-induced protein from Hordeum vulgare (Barley).